The following is a 536-amino-acid chain: Anthranilate synthase component 1 2 (536 aa).

L-tryptophan-binding positions include Ser-59 and 299-301 (PYM). Residue 334–335 (GT) coordinates chorismate. Glu-361 is a Mg(2+) binding site. Chorismate-binding positions include Tyr-449, Arg-469, 487 to 489 (GAG), and Gly-489. A Mg(2+)-binding site is contributed by Glu-502.

The protein belongs to the anthranilate synthase component I family. Tetramer of two components I and two components II. It depends on Mg(2+) as a cofactor.

The enzyme catalyses chorismate + L-glutamine = anthranilate + pyruvate + L-glutamate + H(+). It participates in amino-acid biosynthesis; L-tryptophan biosynthesis; L-tryptophan from chorismate: step 1/5. The chain is Anthranilate synthase component 1 2 (trpE2) from Haloarcula marismortui (strain ATCC 43049 / DSM 3752 / JCM 8966 / VKM B-1809) (Halobacterium marismortui).